The sequence spans 190 residues: UPF0301 protein Rmet_2743 (190 aa).

The protein belongs to the UPF0301 (AlgH) family.

This is UPF0301 protein Rmet_2743 from Cupriavidus metallidurans (strain ATCC 43123 / DSM 2839 / NBRC 102507 / CH34) (Ralstonia metallidurans).